The primary structure comprises 105 residues: Large ribosomal subunit protein uL24 (105 aa).

This sequence belongs to the universal ribosomal protein uL24 family. As to quaternary structure, part of the 50S ribosomal subunit.

Its function is as follows. One of two assembly initiator proteins, it binds directly to the 5'-end of the 23S rRNA, where it nucleates assembly of the 50S subunit. One of the proteins that surrounds the polypeptide exit tunnel on the outside of the subunit. In Xylella fastidiosa (strain M12), this protein is Large ribosomal subunit protein uL24.